The chain runs to 78 residues: Omega-conotoxin PnVIA (78 aa).

The first 22 residues, 1–22 (MKLTCMMIIAVLFLTAWTFVMA), serve as a signal peptide directing secretion. Residues 23–45 (DDPRDEPEARDEMNPAASKLNER) constitute a propeptide that is removed on maturation. 3 disulfides stabilise this stretch: cysteine 47/cysteine 65, cysteine 54/cysteine 69, and cysteine 64/cysteine 73. Glutamine 76 is modified (glutamine amide).

Expressed by the venom duct.

Its subcellular location is the secreted. Its function is as follows. Omega-conotoxins act at presynaptic membranes, they bind and block voltage-gated calcium channels (Cav). Acts on high voltage-activated (HVA) calcium currents in molluscan neurons. This chain is Omega-conotoxin PnVIA, found in Conus pennaceus (Feathered cone).